The chain runs to 525 residues: Allantoate deiminase (525 aa).

An N-terminal signal peptide occupies residues 1–53; sequence MAVPHPSSSSSRSHPFLSHVYHTSFHHHHHHNHPSLVLFWCLVFSLLSPLALS. Residues 56 to 75 show a composition bias toward low complexity; sequence SSSSSSSSDSSSSSSSHISL. The disordered stretch occupies residues 56–78; sequence SSSSSSSSDSSSSSSSHISLGIG. N-linked (GlcNAc...) asparagine glycosylation is present at Asn-156. Mn(2+)-binding residues include His-167, Asp-178, Glu-215, His-281, and His-499.

The protein belongs to the peptidase M20A family. Homodimer. It depends on Mn(2+) as a cofactor. As to expression, expressed in seedlings, roots, stems, leaves, flowers, siliques and seeds.

It is found in the endoplasmic reticulum. It catalyses the reaction allantoate + H2O + 2 H(+) = (S)-2-ureidoglycine + NH4(+) + CO2. Inhibited by borate, fluoride, L-Asn and L-Asp, but not by phenylphosphorodiamidate. In terms of biological role, involved in the catabolism of purine nucleotides. Can use allantoate as substrate, but not Nalpha-carbamoyl-L-Asp, Nalpha-carbamoyl-L-Ala or Nalpha-carbamoyl-Gly. The sequential activity of AAH, UGLYAH and UAH allows a complete purine breakdown without the intermediate generation of urea. Involved in the regulation of seed maturation and seed dormancy. In Arabidopsis thaliana (Mouse-ear cress), this protein is Allantoate deiminase.